The following is a 56-amino-acid chain: Small ribosomal subunit protein uS14 (56 aa).

Zn(2+) is bound by residues cysteine 21, cysteine 24, cysteine 39, and cysteine 42.

This sequence belongs to the universal ribosomal protein uS14 family. In terms of assembly, component of the 40S small ribosomal subunit. Zn(2+) is required as a cofactor.

The protein resides in the cytoplasm. The protein localises to the cytosol. It is found in the rough endoplasmic reticulum. The polypeptide is Small ribosomal subunit protein uS14 (RpS29) (Bombyx mori (Silk moth)).